The following is a 486-amino-acid chain: Iron-sulfur cluster assembly SufBD family protein ycf24 (486 aa).

This sequence belongs to the iron-sulfur cluster assembly SufBD family.

The protein localises to the plastid. It is found in the chloroplast. This Trieres chinensis (Marine centric diatom) protein is Iron-sulfur cluster assembly SufBD family protein ycf24 (ycf24).